We begin with the raw amino-acid sequence, 510 residues long: Ninja-family protein mc410 (510 aa).

Disordered regions lie at residues 1–179, 323–414, and 481–510; these read MDEN…RQIL, HPSH…PSEF, and RHAS…SAQS. Basic and acidic residues-rich tracts occupy residues 31–44 and 103–146; these read SKVE…KVIN and RPVE…DKTR. A compositionally biased stretch (polar residues) spans 148 to 160; it reads SHISITTDEGSTA. Composition is skewed to basic and acidic residues over residues 363 to 389 and 397 to 406; these read RAME…EENV and RAKDPPDQPR. Residues 485 to 496 show a composition bias toward polar residues; that stretch reads VEQTSQEPGTGV. Over residues 497 to 510 the composition is skewed to low complexity; the sequence is SSFPSSNPAASAQS.

The protein belongs to the Ninja family.

It is found in the nucleus. The chain is Ninja-family protein mc410 (MC410) from Nicotiana tabacum (Common tobacco).